We begin with the raw amino-acid sequence, 267 residues long: NAD kinase (267 aa).

Asp52 functions as the Proton acceptor in the catalytic mechanism. NAD(+)-binding positions include Asp52 to Gly53, Arg57, Asn121 to Glu122, Arg132, Lys150, Asp152, Thr163 to Ser168, and Ala187.

It belongs to the NAD kinase family. A divalent metal cation serves as cofactor.

The protein localises to the cytoplasm. It catalyses the reaction NAD(+) + ATP = ADP + NADP(+) + H(+). Involved in the regulation of the intracellular balance of NAD and NADP, and is a key enzyme in the biosynthesis of NADP. Catalyzes specifically the phosphorylation on 2'-hydroxyl of the adenosine moiety of NAD to yield NADP. The protein is NAD kinase of Fusobacterium nucleatum subsp. nucleatum (strain ATCC 25586 / DSM 15643 / BCRC 10681 / CIP 101130 / JCM 8532 / KCTC 2640 / LMG 13131 / VPI 4355).